Consider the following 163-residue polypeptide: Nucleotide-binding protein Clos_1967 (163 aa).

This sequence belongs to the YajQ family.

Functionally, nucleotide-binding protein. The protein is Nucleotide-binding protein Clos_1967 of Alkaliphilus oremlandii (strain OhILAs) (Clostridium oremlandii (strain OhILAs)).